Here is an 819-residue protein sequence, read N- to C-terminus: Advillin (819 aa).

The tract at residues 1-731 (MSLSSAFRAV…YEQLKNELGD (731 aa)) is core. A Gelsolin-like 1 repeat occupies 24 to 73 (MELALVPLSAHGNFYEGDCYIVLSTRRVGSLLSQNIHFWIGKDSSQDEQS). Tyr-85 is modified (phosphotyrosine). Residues 109 to 116 (KQGIIYKK) and 135 to 143 (RLLHVKGKR) contribute to the a 1,2-diacyl-sn-glycero-3-phospho-(1D-myo-inositol-4,5-bisphosphate) site. 5 Gelsolin-like repeats span residues 145 to 185 (IQAT…GERL), 262 to 306 (LSVT…VEKQ), 403 to 454 (ENLE…DELA), 525 to 565 (TKAV…DERA), and 628 to 669 (FLVT…TEKK). The segment at 628–819 (FLVTEVTDFT…LQLKKERGLF (192 aa)) is required for interaction with F-actin. The interval 732-819 (ATAIVRITAD…LQLKKERGLF (88 aa)) is headpiece. A phosphotyrosine mark is found at Tyr-748 and Tyr-758. The HP domain maps to 753 to 819 (DGEPKYYPVE…LQLKKERGLF (67 aa)).

Belongs to the villin/gelsolin family. Associates (via C-terminus) with actin. Interacts with F-actin. Interacts with SCARF1; the interaction occurs in embryonic dorsal root ganglions at 18 dpc and induces neurite-like outgrowth. Interacts with PLCE1. Interacts with ACTR2 and ACTR3; associates with the ARP2/3 complex. In terms of tissue distribution, most highly expressed in the endometrium of the uterus, the intestinal villi and the testes. Weaker expression also detected in the brain, dorsal root ganglions and on the surface of the tongue.

It is found in the cytoplasm. The protein localises to the cytoskeleton. Its subcellular location is the cell projection. It localises to the lamellipodium. The protein resides in the cell junction. It is found in the focal adhesion. The protein localises to the neuron projection. Its subcellular location is the axon. In terms of biological role, ca(2+)-regulated actin-binding protein which plays an important role in actin bundling. May have a unique function in the morphogenesis of neuronal cells which form ganglia. Required for SREC1-mediated regulation of neurite-like outgrowth. Plays a role in regenerative sensory axon outgrowth and remodeling processes after peripheral injury in neonates. Involved in the formation of long fine actin-containing filopodia-like structures in fibroblast. Plays a role in ciliogenesis. In podocytes, controls lamellipodia formation through the regulation of EGF-induced diacylglycerol generation by PLCE1 and ARP2/3 complex assembly. This is Advillin from Mus musculus (Mouse).